A 185-amino-acid polypeptide reads, in one-letter code: Elongation factor P (185 aa).

It belongs to the elongation factor P family.

The protein resides in the cytoplasm. It participates in protein biosynthesis; polypeptide chain elongation. Its function is as follows. Involved in peptide bond synthesis. Stimulates efficient translation and peptide-bond synthesis on native or reconstituted 70S ribosomes in vitro. Probably functions indirectly by altering the affinity of the ribosome for aminoacyl-tRNA, thus increasing their reactivity as acceptors for peptidyl transferase. This is Elongation factor P from Finegoldia magna (strain ATCC 29328 / DSM 20472 / WAL 2508) (Peptostreptococcus magnus).